Reading from the N-terminus, the 197-residue chain is Lactoylglutathione lyase-like protein terB (197 aa).

A signal peptide spans 1 to 19 (MARFAVLQLLLPLAAGLTG). Residues Asn-82, Asn-99, and Asn-140 are each glycosylated (N-linked (GlcNAc...) asparagine).

The protein belongs to the glyoxalase I family.

Functionally, lactoylglutathione lyase-like protein; part of the gene cluster that mediates the biosynthesis of terrein, a fungal metabolite with ecological, antimicrobial, antiproliferative, and antioxidative activities. The first step in the pathway is performed by the polyketide synthase terA that produces 4-hydroxy-6-methylpyranon (4-HMP), orsellinic acid (OA), and 2,3-dehydro-6-hydroxymellein (2,3-dehydro-6-HM) by condensing acetyl-CoA with two, three, or four malonyl-CoA units, respectively. 4-HMP and OA are not pathway intermediates, but are rather shunt or side products. 2,3-dehydro-6-HM is further converted to 6-hydroxymellein (6-HM) by the 6-hydroxymellein synthase terB. The monooxygenases terC and terD, the multicopper oxidase terE and the Kelch-like protein terF are then involved in the transformation of 6-HM to terrein. Even if they are co-regulated with the other terrein cluster genes, terH and terI seem to be dispensable for terrein production; whereas one or both of the 2 transporters terG and terJ are probably required for efficient secretion of metabolites. This chain is Lactoylglutathione lyase-like protein terB, found in Aspergillus terreus (strain NIH 2624 / FGSC A1156).